The following is a 129-amino-acid chain: DNA-directed RNA polymerase subunit omega (129 aa).

The segment at 77–98 (VDEPESEVVPALSSAPQNPEAI) is disordered.

Belongs to the RNA polymerase subunit omega family. In terms of assembly, the RNAP catalytic core consists of 2 alpha, 1 beta, 1 beta' and 1 omega subunit. When a sigma factor is associated with the core the holoenzyme is formed, which can initiate transcription.

The catalysed reaction is RNA(n) + a ribonucleoside 5'-triphosphate = RNA(n+1) + diphosphate. Promotes RNA polymerase assembly. Latches the N- and C-terminal regions of the beta' subunit thereby facilitating its interaction with the beta and alpha subunits. This Methylocella silvestris (strain DSM 15510 / CIP 108128 / LMG 27833 / NCIMB 13906 / BL2) protein is DNA-directed RNA polymerase subunit omega.